Consider the following 154-residue polypeptide: Protein FasC (154 aa).

It belongs to the periplasmic pilus chaperone family.

Its function is as follows. Could be required for the biogenesis of a putative fimbria. This Escherichia coli protein is Protein FasC (fasC).